Reading from the N-terminus, the 388-residue chain is Chorismate synthase (388 aa).

NADP(+)-binding residues include arginine 39 and arginine 45. Residues 95–118 (EKNEKSRRVSRPRPGHADLVGGMK) are disordered. FMN-binding positions include 130–132 (RSS), 251–252 (NA), glycine 296, 311–315 (KPIPT), and arginine 337.

It belongs to the chorismate synthase family. As to quaternary structure, homotetramer. Requires FMNH2 as cofactor.

The enzyme catalyses 5-O-(1-carboxyvinyl)-3-phosphoshikimate = chorismate + phosphate. Its pathway is metabolic intermediate biosynthesis; chorismate biosynthesis; chorismate from D-erythrose 4-phosphate and phosphoenolpyruvate: step 7/7. Functionally, catalyzes the anti-1,4-elimination of the C-3 phosphate and the C-6 proR hydrogen from 5-enolpyruvylshikimate-3-phosphate (EPSP) to yield chorismate, which is the branch point compound that serves as the starting substrate for the three terminal pathways of aromatic amino acid biosynthesis. This reaction introduces a second double bond into the aromatic ring system. The sequence is that of Chorismate synthase from Listeria monocytogenes serovar 1/2a (strain ATCC BAA-679 / EGD-e).